A 305-amino-acid chain; its full sequence is tRNA dimethylallyltransferase (305 aa).

8 to 15 lines the ATP pocket; the sequence is GPTAIGKS. A substrate-binding site is contributed by 10–15; the sequence is TAIGKS. Positions 33 to 36 are interaction with substrate tRNA; sequence DSMA.

It belongs to the IPP transferase family. As to quaternary structure, monomer. Mg(2+) serves as cofactor.

The catalysed reaction is adenosine(37) in tRNA + dimethylallyl diphosphate = N(6)-dimethylallyladenosine(37) in tRNA + diphosphate. Functionally, catalyzes the transfer of a dimethylallyl group onto the adenine at position 37 in tRNAs that read codons beginning with uridine, leading to the formation of N6-(dimethylallyl)adenosine (i(6)A). In Aquifex aeolicus (strain VF5), this protein is tRNA dimethylallyltransferase.